A 395-amino-acid chain; its full sequence is MRTLGGFTFPCDAPVFVRVDFNVPMDEVGTITDDLRIRASLPTIESLLGRGAPLILISHLGRPVKNEQQGFSLKPCAERLSEYIGVNVPLVDFLDLDTKLYGELTRHLDKSGIVLFENIRFFAEETSKAQADRRILAEQLAPFAGAYVNDAFGASHRRHASVYELAQAFSNKAAGFLIESEMQAFSHLASEAKRPYTVILGGAKLSDKLRLIENILPTVDRLLLCGGMAFTFLAAQGCETGKSLLEESFIPEANKIIDFAKQNNVELILPVDVIEARSLTSPLGVVSKAESISYMGLDIGPETQSIFRNVIQDSKTVFWNGPAGLFENPSFSNGTRALLDALSSSSAFTFIGGGDTAAAVSLLGFDYGDFSHVSTGGGACLELLEGKILPALEVL.

Substrate-binding positions include 20–22, Arg36, 59–62, Arg120, and Arg157; these read DFN and HLGR. ATP is bound by residues Lys208, Gly296, Glu327, and 353–356; that span reads GGDT.

It belongs to the phosphoglycerate kinase family. As to quaternary structure, monomer.

The protein localises to the cytoplasm. The catalysed reaction is (2R)-3-phosphoglycerate + ATP = (2R)-3-phospho-glyceroyl phosphate + ADP. It functions in the pathway carbohydrate degradation; glycolysis; pyruvate from D-glyceraldehyde 3-phosphate: step 2/5. The sequence is that of Phosphoglycerate kinase from Tropheryma whipplei (strain Twist) (Whipple's bacillus).